A 201-amino-acid polypeptide reads, in one-letter code: Recombination protein RecR (201 aa).

A C4-type zinc finger spans residues 58 to 73 (CPECGLLTEEERCGLC). A Toprim domain is found at 81 to 176 (TLLCVVESSA…RTTRIAHGVP (96 aa)).

It belongs to the RecR family.

In terms of biological role, may play a role in DNA repair. It seems to be involved in an RecBC-independent recombinational process of DNA repair. It may act with RecF and RecO. In Halorhodospira halophila (strain DSM 244 / SL1) (Ectothiorhodospira halophila (strain DSM 244 / SL1)), this protein is Recombination protein RecR.